A 302-amino-acid chain; its full sequence is Protoheme IX farnesyltransferase (302 aa).

Transmembrane regions (helical) follow at residues 27–47, 53–73, 100–120, 121–141, 149–169, 175–195, 215–235, 237–257, and 273–293; these read VVAL…PGMV, LFGL…NHVI, LVFA…AVNV, LTAV…TVFL, IVWG…AVTG, PLLL…ALAI, VAFT…VSLV, FIIH…GIGF, and AMPT…LLLV.

This sequence belongs to the UbiA prenyltransferase family. Protoheme IX farnesyltransferase subfamily.

It is found in the cell inner membrane. The enzyme catalyses heme b + (2E,6E)-farnesyl diphosphate + H2O = Fe(II)-heme o + diphosphate. Its pathway is porphyrin-containing compound metabolism; heme O biosynthesis; heme O from protoheme: step 1/1. Converts heme B (protoheme IX) to heme O by substitution of the vinyl group on carbon 2 of heme B porphyrin ring with a hydroxyethyl farnesyl side group. This is Protoheme IX farnesyltransferase from Thioalkalivibrio sulfidiphilus (strain HL-EbGR7).